A 237-amino-acid chain; its full sequence is MQLTEQQQDKLSKVQLEESWKRSLTPFLLSPYMDSLRDFLFQQKQAQKTIYPPSKQIFNALNITPLDHVKVVILGQDPYHGPNQANGLSFSVQRGVALPPSLRNIFHELHTDLGVPVSRHGDLTKWAEQGVLLLNSVLTVEAGQPTSHQKQGWEEFTDAVIDVLNEQREHIVFILWGAYAQRKGQRINREKHLVLTAAHPSPLAANRGGFFGCKVFSKTNQYLKQHGIEPIDWQLDA.

Asp77 serves as the catalytic Proton acceptor.

Belongs to the uracil-DNA glycosylase (UDG) superfamily. UNG family.

The protein localises to the cytoplasm. The catalysed reaction is Hydrolyzes single-stranded DNA or mismatched double-stranded DNA and polynucleotides, releasing free uracil.. Excises uracil residues from the DNA which can arise as a result of misincorporation of dUMP residues by DNA polymerase or due to deamination of cytosine. This is Uracil-DNA glycosylase from Acinetobacter baumannii (strain ACICU).